Consider the following 191-residue polypeptide: UPF0669 protein C6orf120 homolog (191 aa).

Residues 1-30 (MAAPRGRAAPWTTALLLLLTSQILSPGSCA) form the signal peptide. Residue Asn53 is glycosylated (N-linked (GlcNAc...) asparagine).

This sequence belongs to the UPF0669 family.

The protein localises to the secreted. Its function is as follows. May be involved in induction of apoptosis in CD4(+) T-cells, but not CD8(+) T-cells or hepatocytes. This Macaca fascicularis (Crab-eating macaque) protein is UPF0669 protein C6orf120 homolog.